The sequence spans 63 residues: Small ribosomal subunit protein bS21 (63 aa).

This sequence belongs to the bacterial ribosomal protein bS21 family.

The sequence is that of Small ribosomal subunit protein bS21 from Syntrophus aciditrophicus (strain SB).